The chain runs to 344 residues: Glyceraldehyde-3-phosphate dehydrogenase (344 aa).

NAD(+)-binding positions include threonine 11–isoleucine 12 and glycine 110. Serine 139–asparagine 141 contacts D-glyceraldehyde 3-phosphate. Catalysis depends on cysteine 140, which acts as the Nucleophile. An NAD(+)-binding site is contributed by arginine 169. Residue histidine 195 to glycine 196 participates in D-glyceraldehyde 3-phosphate binding. Glutamine 302 contributes to the NAD(+) binding site.

This sequence belongs to the glyceraldehyde-3-phosphate dehydrogenase family. In terms of assembly, homotetramer.

The protein resides in the cytoplasm. It catalyses the reaction D-glyceraldehyde 3-phosphate + phosphate + NADP(+) = (2R)-3-phospho-glyceroyl phosphate + NADPH + H(+). The enzyme catalyses D-glyceraldehyde 3-phosphate + phosphate + NAD(+) = (2R)-3-phospho-glyceroyl phosphate + NADH + H(+). It functions in the pathway carbohydrate degradation; glycolysis; pyruvate from D-glyceraldehyde 3-phosphate: step 1/5. In Pyrobaculum calidifontis (strain DSM 21063 / JCM 11548 / VA1), this protein is Glyceraldehyde-3-phosphate dehydrogenase.